Here is a 1984-residue protein sequence, read N- to C-terminus: Sodium channel protein type 9 subunit alpha (1984 aa).

At 1-125 (MAMLPPPGPQ…RRISIKILVH (125 aa)) the chain is on the cytoplasmic side. Over residues 26–47 (RIAEGKTKEPKEEKKDDHDEGP) the composition is skewed to basic and acidic residues. The tract at residues 26 to 55 (RIAEGKTKEPKEEKKDDHDEGPKPSSDLEA) is disordered. The I repeat unit spans residues 112 to 408 (FSPLRRISIK…VAMAYEEQNQ (297 aa)). The helical transmembrane segment at 126–145 (SLFSMLIMCTILTNCIFMTM) threads the bilayer. Residues 146 to 150 (NNPAE) are Extracellular-facing. A helical transmembrane segment spans residues 151–172 (WTKNVEYTFTGIYTFESLVKIF). Over 173–185 (ARGFCVGEFTFLR) the chain is Cytoplasmic. Residues 186 to 204 (DPWNWLDFIVIVFAYLTEF) traverse the membrane as a helical segment. The Extracellular portion of the chain corresponds to 205–210 (VNLGNV). A glycan (N-linked (GlcNAc...) asparagine) is linked at Asn-209. The helical transmembrane segment at 211–227 (SALRTFRVLRALKTISV) threads the bilayer. The Cytoplasmic segment spans residues 228 to 241 (IPGLKTIVGALIQS). The helical transmembrane segment at 242–267 (VKKLSDVIILTVFCLSVFALIGLQLF) threads the bilayer. The Extracellular segment spans residues 268-344 (MGHLKHKCLR…PDYGYTSFDT (77 aa)). Cysteines 275 and 322 form a disulfide. N-linked (GlcNAc...) asparagine glycosylation occurs at Asn-281. The pore-forming intramembrane region spans 345 to 361 (FSWAFLALFRLMTQDYW). At 362–374 (ENLYQQTLRAAGK) the chain is on the extracellular side. The chain crosses the membrane as a helical span at residues 375–400 (TYMIFFVVVIFLGSFYLINLILAVVA). The Cytoplasmic portion of the chain corresponds to 401–742 (MAYEEQNQAN…FIYIIVMDPF (342 aa)). The segment covering 459-469 (SSSETSKLSSK) has biased composition (low complexity). 2 disordered regions span residues 459–517 (SSSE…LGVE) and 563–610 (GSET…PPML). The span at 472-484 (KERRNRRKKKNQK) shows a compositional bias: basic residues. 2 stretches are compositionally biased toward basic and acidic residues: residues 487–508 (SSGEEKGDDEKLSKSESEESIS) and 571–583 (DEHSIFGDNESRR). The II repeat unit spans residues 723–986 (CSPFWIKFKK…EEDTDANNLQ (264 aa)). Residues 743–759 (VDLAITICIVLNTLFMA) form a helical membrane-spanning segment. The Extracellular segment spans residues 760-768 (MEHHPMTEE). Residues 769–793 (FKNVLVVGNLVFTGIFAAEMVLKLI) traverse the membrane as a helical segment. Residues 794-802 (AMDPYEYFQ) lie on the Cytoplasmic side of the membrane. A helical transmembrane segment spans residues 803-819 (VGWNVFDSLIVTLSLVE). The Extracellular portion of the chain corresponds to 820–828 (LFLADVEGL). A helical transmembrane segment spans residues 829 to 845 (SVLRSFRLLRVFKLAKS). Topologically, residues 846 to 862 (WPTLNMLIKIIGNSVGP) are cytoplasmic. The chain crosses the membrane as a helical span at residues 863–885 (LGNLTLVLAIIVFIFAVVGMQLF). The Extracellular portion of the chain corresponds to 886–912 (GKSYKECVCKINDDCSLPRWHMNDFFH). Cysteines 894 and 900 form a disulfide. Residues 913–925 (SFLIVFRVLCGEW) constitute an intramembrane region (pore-forming). Residues 926-937 (IETMWDCMEVAG) lie on the Extracellular side of the membrane. A disulfide bond links Cys-932 and Cys-941. Residues 938 to 964 (QAMCLIVYMMVMVIGNLVVLNLFLALL) traverse the membrane as a helical segment. At 965 to 1184 (LSSFSSDNLS…WWNIRKTCYR (220 aa)) the chain is on the cytoplasmic side. Positions 1087 to 1146 (PIAPGESDLENMNTEELSSDSESEYSKERLNRSSSSECSTVDNALPGEGEEAEAEPVNSD) are disordered. The segment covering 1118 to 1128 (RSSSSECSTVD) has biased composition (polar residues). Positions 1134–1146 (EGEEAEAEPVNSD) are enriched in acidic residues. An III repeat occupies 1177 to 1485 (NIRKTCYRIV…KKYYNAMKKL (309 aa)). The chain crosses the membrane as a helical span at residues 1185 to 1209 (IVEHSWFESFIVLMILLSSGALAFE). Residues 1210 to 1221 (DIYIEKKKTIKI) are Extracellular-facing. Residues 1222-1247 (ILEYADKIFTYIFILEMLLKWVAYGY) form a helical membrane-spanning segment. Over 1248 to 1249 (KT) the chain is Cytoplasmic. A helical transmembrane segment spans residues 1250–1275 (YFTNAWCWLDFLIVDVSLVTLVANTL). The Extracellular segment spans residues 1276-1284 (GYSDLGPIK). The chain crosses the membrane as a helical span at residues 1285–1301 (SLRTLRALRPLRALSRF). Residues 1302–1314 (EGMRVVVNALIGA) are Cytoplasmic-facing. The helical transmembrane segment at 1315-1339 (IPSIMNVLLVCLIFWLIFSIMGVNL) threads the bilayer. Topologically, residues 1340–1391 (FAGKFYQCVNTTDDSRFPTKQVSNRSECFALMNGSQNVRWKNLKVNFDNVGL) are extracellular. An intrachain disulfide couples Cys-1347 to Cys-1367. Residues Asn-1349, Asn-1363, and Asn-1372 are each glycosylated (N-linked (GlcNAc...) asparagine). Residues 1392-1402 (RYLSLLQVATF) constitute an intramembrane region (pore-forming). The Extracellular segment spans residues 1403–1428 (KGWMDIMYAAVDSVNVDQQPSYEHNL). The helical transmembrane segment at 1429-1454 (YMYIYFVIFIIFGSFFTLNLFIGVII) threads the bilayer. The Cytoplasmic segment spans residues 1455-1511 (DNFNQQKKKLGGQDIFMTEEQKKYYNAMKKLGSKKPQKPIPRPGNKFQGCIFDLVTN). Ser-1487 bears the Phosphoserine; by PKC mark. One copy of the IV repeat lies at 1494–1792 (IPRPGNKFQG…WEKFDPDATQ (299 aa)). A helical transmembrane segment spans residues 1512-1531 (QAFDITIMILICLNMVTMMV). The Extracellular segment spans residues 1532–1542 (EKEGQSDYMTD). The helical transmembrane segment at 1543–1564 (VLYWINVVFIILFTGECVLKLI) threads the bilayer. Topologically, residues 1565–1573 (SLRHYYFTI) are cytoplasmic. The chain crosses the membrane as a helical span at residues 1574-1595 (GWNIFDFVVVILSIVGMFLAEL). Over 1596 to 1604 (IETYFVSPT) the chain is Extracellular. Residues 1605–1624 (LFRVIRLARIGRILRLIKGA) traverse the membrane as a helical segment. Topologically, residues 1625–1637 (KGIRTLLFALMMS) are cytoplasmic. The chain crosses the membrane as a helical span at residues 1638 to 1660 (LPALFNIGLLLFLVMFIYAIFGM). At 1661–1683 (SNFAYVKKEAGINDMFNFETFGN) the chain is on the extracellular side. The pore-forming intramembrane region spans 1684–1696 (SMICLFQITTSAG). The Extracellular portion of the chain corresponds to 1697–1730 (WDGLLAPILNSAPPDCDPKKVHPGSSTEGDCGSP). Cys-1712 and Cys-1727 form a disulfide bridge. The chain crosses the membrane as a helical span at residues 1731–1756 (SVGIFYFVSYIIISFLVVVNMYIAVI). Topologically, residues 1757-1984 (LENFSVATEE…KGKDGKETKK (228 aa)) are cytoplasmic. An IQ domain is found at 1886-1915 (EDVSATVIQRAYRRYRLRQNVKNISSIYIK). The tract at residues 1924–1984 (PNKGDIVFDN…KGKDGKETKK (61 aa)) is disordered. Polar residues predominate over residues 1933–1956 (NVNSSSPEKTDATASTISPPSYDS). Residues 1958 to 1984 (TKPDKEKYEKDKTEKEDKGKDGKETKK) show a composition bias toward basic and acidic residues.

The protein belongs to the sodium channel (TC 1.A.1.10) family. Nav1.7/SCN9A subfamily. The Nav1.7 voltage-gated sodium channel consists of an ion-conducting alpha subunit SCN9A which is functional on its own regulated by one or more beta-1 (SCN1B), beta-2 (SCN2B), beta-3 (SCN3B) and beta-4 (SCN4B) subunits. SCN1B and SCN3B are non-covalently associated with SCN9A. SCN2B and SCN4B are disulfide-linked to SCN9A. SCN1B regulates channel inactivation. Interacts with NEDD4 and NEDD4L; regulates Nav1.7 activity most probably through ubiquitination and subsequent endocytosis. Interacts with TMEM233; modulates the gating properties of NaV1.7. Phosphorylation at Ser-1487 by PKC in a highly conserved cytoplasmic loop increases peak sodium currents. In terms of processing, ubiquitinated by NEDD4L; which may promote its endocytosis. In terms of tissue distribution, expressed in the sciatic nerve, spinal cord, brainstem, cerebellum and cortex, but not expressed in the lung, skeletal and cardiac muscles, kidney and liver.

Its subcellular location is the cell membrane. The protein resides in the cell projection. It is found in the neuron projection. The protein localises to the axon. It catalyses the reaction Na(+)(in) = Na(+)(out). Functionally, pore-forming subunit of Nav1.7, a voltage-gated sodium (Nav) channel that directly mediates the depolarizing phase of action potentials in excitable membranes. Navs, also called VGSCs (voltage-gated sodium channels) or VDSCs (voltage-dependent sodium channels), operate by switching between closed and open conformations depending on the voltage difference across the membrane. In the open conformation they allow Na(+) ions to selectively pass through the pore, along their electrochemical gradient. The influx of Na(+) ions provokes membrane depolarization, initiating the propagation of electrical signals throughout cells and tissues. Nav1.7 plays a crucial role in controlling the excitability and action potential propagation from nociceptor neurons, thereby contributing to the sensory perception of pain. This chain is Sodium channel protein type 9 subunit alpha, found in Oryctolagus cuniculus (Rabbit).